Consider the following 434-residue polypeptide: Peptidase B (434 aa).

Mn(2+)-binding residues include Lys198 and Asp203. Lys210 is an active-site residue. Asp221, Asp280, and Glu282 together coordinate Mn(2+). Residue Arg284 is part of the active site.

This sequence belongs to the peptidase M17 family. As to quaternary structure, homohexamer. Requires Mn(2+) as cofactor.

The protein resides in the cytoplasm. It catalyses the reaction Release of an N-terminal amino acid, Xaa, from a peptide or arylamide. Xaa is preferably Glu or Asp but may be other amino acids, including Leu, Met, His, Cys and Gln.. In terms of biological role, probably plays an important role in intracellular peptide degradation. In Pasteurella multocida (strain Pm70), this protein is Peptidase B.